The sequence spans 164 residues: UPF0114 protein Sbal_0780 (164 aa).

The next 4 helical transmembrane spans lie at 15 to 35, 53 to 73, 109 to 129, and 136 to 156; these read IMAP…VKFF, LVLL…IVMV, VAAS…MNAE, and IMWY…MGYL.

Belongs to the UPF0114 family.

It is found in the cell membrane. In Shewanella baltica (strain OS155 / ATCC BAA-1091), this protein is UPF0114 protein Sbal_0780.